A 216-amino-acid polypeptide reads, in one-letter code: MAAGPRTSVLLAFGLLCLPWPQDVGAFPAMPLSSLFANAVLRAQHLHQLAADTYKEFERAYIPEGQRYSIQNAQAAFCFSETIPAPTGKDEAQQRSDMELLRFSLLLIQSWLGPVQLLSRVFTNSLVFGTSDRVYEKLRDLEEGIQALMRELEDGSPRAGQILKQTYDKFDTNLRSDDALLKNYGLLSCFKKDLHKAETYLRVMKCRRFVESSCAF.

Positions 1–26 (MAAGPRTSVLLAFGLLCLPWPQDVGA) are cleaved as a signal peptide. His-45 is a binding site for Zn(2+). A disulfide bridge links Cys-78 with Cys-189. Ser-131 bears the Phosphoserine mark. A Zn(2+)-binding site is contributed by Glu-198. Cys-206 and Cys-214 are disulfide-bonded.

The protein belongs to the somatotropin/prolactin family.

It is found in the secreted. Plays an important role in growth control. Its major role in stimulating body growth is to stimulate the liver and other tissues to secrete IGF1. It stimulates both the differentiation and proliferation of myoblasts. It also stimulates amino acid uptake and protein synthesis in muscle and other tissues. The polypeptide is Somatotropin (GH1) (Equus caballus (Horse)).